Consider the following 175-residue polypeptide: Peptide deformylase (175 aa).

Fe cation contacts are provided by Cys99 and His141. The active site involves Glu142. His145 serves as a coordination point for Fe cation.

Belongs to the polypeptide deformylase family. It depends on Fe(2+) as a cofactor.

The enzyme catalyses N-terminal N-formyl-L-methionyl-[peptide] + H2O = N-terminal L-methionyl-[peptide] + formate. Functionally, removes the formyl group from the N-terminal Met of newly synthesized proteins. Requires at least a dipeptide for an efficient rate of reaction. N-terminal L-methionine is a prerequisite for activity but the enzyme has broad specificity at other positions. The protein is Peptide deformylase of Rickettsia akari (strain Hartford).